We begin with the raw amino-acid sequence, 506 residues long: Protein P7 (506 aa).

RNA-binding stretches follow at residues Ile128–Glu249 and Asp325–Ser355.

The protein belongs to the phytoreovirus protein P7 family.

It is found in the virion. Its subcellular location is the host cytoplasm. Its function is as follows. Probable component of the transcriptional machinery present in the inner capsid. Displays dsRNA binding activity and may play an important role in the sorting of viral RNA and virion assembly. Together with the RNA-directed RNA polymerase P1 and capping enzyme P5, forms an transcriptional complex positioned near the channels situated at each of the five-fold vertices of the core. The protein is Protein P7 of Alopecurus aequalis (Barnyard grass).